Here is a 155-residue protein sequence, read N- to C-terminus: MAPK regulated corepressor interacting protein 2 (155 aa).

Position 1 is an N-acetylmethionine (methionine 1). The tract at residues 1–59 (MYTITKGPSKLVAQRRTGPTQQQVESRLGELLKCRHSAPTPQHPRAQPPGPWPLSSPGP) is disordered. An Omega-N-methylarginine modification is found at arginine 35. The segment covering 46–56 (AQPPGPWPLSS) has biased composition (pro residues). Phosphoserine is present on serine 56. Arginine 60 is modified (omega-N-methylarginine). At serine 77 the chain carries Phosphoserine.

It belongs to the MCRIP family. In terms of assembly, interacts with DDX6. Interacts with MCRIP1.

It localises to the cytoplasm. Its subcellular location is the stress granule. The protein localises to the nucleus. In Bos taurus (Bovine), this protein is MAPK regulated corepressor interacting protein 2 (MCRIP2).